The primary structure comprises 355 residues: UDP-N-acetylglucosamine--N-acetylmuramyl-(pentapeptide) pyrophosphoryl-undecaprenol N-acetylglucosamine transferase (355 aa).

Residues 13–15 (TGG), asparagine 125, arginine 162, serine 190, isoleucine 244, and glutamine 289 each bind UDP-N-acetyl-alpha-D-glucosamine.

The protein belongs to the glycosyltransferase 28 family. MurG subfamily.

It is found in the cell inner membrane. The enzyme catalyses di-trans,octa-cis-undecaprenyl diphospho-N-acetyl-alpha-D-muramoyl-L-alanyl-D-glutamyl-meso-2,6-diaminopimeloyl-D-alanyl-D-alanine + UDP-N-acetyl-alpha-D-glucosamine = di-trans,octa-cis-undecaprenyl diphospho-[N-acetyl-alpha-D-glucosaminyl-(1-&gt;4)]-N-acetyl-alpha-D-muramoyl-L-alanyl-D-glutamyl-meso-2,6-diaminopimeloyl-D-alanyl-D-alanine + UDP + H(+). It functions in the pathway cell wall biogenesis; peptidoglycan biosynthesis. In terms of biological role, cell wall formation. Catalyzes the transfer of a GlcNAc subunit on undecaprenyl-pyrophosphoryl-MurNAc-pentapeptide (lipid intermediate I) to form undecaprenyl-pyrophosphoryl-MurNAc-(pentapeptide)GlcNAc (lipid intermediate II). This chain is UDP-N-acetylglucosamine--N-acetylmuramyl-(pentapeptide) pyrophosphoryl-undecaprenol N-acetylglucosamine transferase, found in Neisseria meningitidis serogroup B (strain ATCC BAA-335 / MC58).